A 94-amino-acid polypeptide reads, in one-letter code: uncharacterized protein (94 aa).

Positions 1–25 (MRAAIAVLFIALVGLATYHLVMSQA) are cleaved as a signal peptide.

This is an uncharacterized protein from Archaeoglobus fulgidus (strain ATCC 49558 / DSM 4304 / JCM 9628 / NBRC 100126 / VC-16).